The primary structure comprises 327 residues: MKKIIKVEAVEKHFGNQVIIPPLSLDIKEGEFLTILGPSGCGKTTLLRMIAGFETPTKGNLLLDDEKINDLPPYKRHMNLVFQHYALFPHMNVEKNICFGMKMQKVPVAEQKERAEEAMRLTQLLEFRNRKPAKLSGGQQQRVAIARAIVNNPRVLLLDEPLGALDFKLRKDLQRELKNLQRNLGITFIYVTHDQEEAMSMSDRIVVMNKGHIEQIGTPKEIYNKPKTLFVATFIGENNIVKNGEGYVAIRPENVKVRSVEEPILKEYHLGHIEDIEFVGNMEKLYVRDEKTSELLMAYQTAEEAAQWSIGDNVYVGWEQEDEVTLN.

Residues 5-235 form the ABC transporter domain; it reads IKVEAVEKHF…PKTLFVATFI (231 aa). 37-44 is an ATP binding site; it reads GPSGCGKT.

It belongs to the ABC transporter superfamily. Spermidine/putrescine importer (TC 3.A.1.11.1) family. In terms of assembly, the complex is composed of two ATP-binding proteins (PotA), two transmembrane proteins (PotB and PotC) and a solute-binding protein (PotD).

It is found in the cell membrane. It carries out the reaction ATP + H2O + polyamine-[polyamine-binding protein]Side 1 = ADP + phosphate + polyamineSide 2 + [polyamine-binding protein]Side 1.. In terms of biological role, part of the ABC transporter complex PotABCD involved in spermidine/putrescine import. Responsible for energy coupling to the transport system. This is Spermidine/putrescine import ATP-binding protein PotA from Bacillus anthracis.